Consider the following 649-residue polypeptide: DNA mismatch repair protein MutL (649 aa).

The protein belongs to the DNA mismatch repair MutL/HexB family.

In terms of biological role, this protein is involved in the repair of mismatches in DNA. It is required for dam-dependent methyl-directed DNA mismatch repair. May act as a 'molecular matchmaker', a protein that promotes the formation of a stable complex between two or more DNA-binding proteins in an ATP-dependent manner without itself being part of a final effector complex. In Streptococcus pneumoniae (strain P1031), this protein is DNA mismatch repair protein MutL.